The chain runs to 225 residues: Ribosomal RNA small subunit methyltransferase G (225 aa).

S-adenosyl-L-methionine contacts are provided by residues Gly96, Phe101, Ala146–Glu147, and Arg160.

This sequence belongs to the methyltransferase superfamily. RNA methyltransferase RsmG family.

It is found in the cytoplasm. In terms of biological role, specifically methylates the N7 position of a guanine in 16S rRNA. The chain is Ribosomal RNA small subunit methyltransferase G from Mycoplasma mobile (strain ATCC 43663 / 163K / NCTC 11711) (Mesomycoplasma mobile).